The sequence spans 1287 residues: Cell adhesion molecule-related/down-regulated by oncogenes (1287 aa).

The first 25 residues, Met-1–Ser-25, serve as a signal peptide directing secretion. Residues Asp-26 to Asp-963 lie on the Extracellular side of the membrane. 5 consecutive Ig-like C2-type domains span residues Pro-29–Ser-114, Asp-120–Glu-204, Pro-225–Thr-303, Glu-310–Glu-396, and Pro-405–Met-516. A disulfide bridge connects residues Cys-50 and Cys-97. 7 N-linked (GlcNAc...) asparagine glycosylation sites follow: Asn-88, Asn-100, Asn-180, Asn-287, Asn-294, Asn-342, and Asn-427. Cystine bridges form between Cys-141–Cys-191 and Cys-243–Cys-290. 2 disulfide bridges follow: Cys-333/Cys-380 and Cys-426/Cys-500. Positions Leu-531–Ser-553 are disordered. Residues Asn-537–Ser-546 show a composition bias toward basic and acidic residues. Asn-570 is a glycosylation site (N-linked (GlcNAc...) asparagine). Fibronectin type-III domains lie at Ala-579–Lys-677, Ala-723–Arg-821, and Pro-826–Lys-926. The N-linked (GlcNAc...) asparagine glycan is linked to Asn-873. Residues Glu-933 to Ala-955 form a disordered region. A helical membrane pass occupies residues Met-964–Ile-984. Over Ala-985–Thr-1287 the chain is Cytoplasmic. The interval Ser-1268–Thr-1287 is disordered.

In terms of assembly, part of a complex that contains BOC, CDON, NEO1, cadherins and CTNNB1. Interacts with NTN3. Interacts with PTCH1. Interacts with GAS1. Interacts with DHH, IHH and SHH. In terms of processing, N-glycosylated.

Its subcellular location is the cell membrane. Component of a cell-surface receptor complex that mediates cell-cell interactions between muscle precursor cells. Promotes differentiation of myogenic cells. The polypeptide is Cell adhesion molecule-related/down-regulated by oncogenes (CDON) (Homo sapiens (Human)).